The primary structure comprises 438 residues: Gamma-glutamyl phosphate reductase (438 aa).

This sequence belongs to the gamma-glutamyl phosphate reductase family.

The protein resides in the cytoplasm. The enzyme catalyses L-glutamate 5-semialdehyde + phosphate + NADP(+) = L-glutamyl 5-phosphate + NADPH + H(+). Its pathway is amino-acid biosynthesis; L-proline biosynthesis; L-glutamate 5-semialdehyde from L-glutamate: step 2/2. Its function is as follows. Catalyzes the NADPH-dependent reduction of L-glutamate 5-phosphate into L-glutamate 5-semialdehyde and phosphate. The product spontaneously undergoes cyclization to form 1-pyrroline-5-carboxylate. The polypeptide is Gamma-glutamyl phosphate reductase (Prochlorococcus marinus (strain NATL1A)).